The following is a 608-amino-acid chain: NADH-quinone oxidoreductase subunit C/D (608 aa).

The interval 1–199 (MSAASSLAPQ…EPFHLSTEKE (199 aa)) is NADH dehydrogenase I subunit C. Residues 223–608 (DFMFLNLGPN…IDFVMADVDR (386 aa)) are NADH dehydrogenase I subunit D.

It in the N-terminal section; belongs to the complex I 30 kDa subunit family. In the C-terminal section; belongs to the complex I 49 kDa subunit family. In terms of assembly, NDH-1 is composed of 13 different subunits. Subunits NuoB, CD, E, F, and G constitute the peripheral sector of the complex.

Its subcellular location is the cell inner membrane. The enzyme catalyses a quinone + NADH + 5 H(+)(in) = a quinol + NAD(+) + 4 H(+)(out). In terms of biological role, NDH-1 shuttles electrons from NADH, via FMN and iron-sulfur (Fe-S) centers, to quinones in the respiratory chain. The immediate electron acceptor for the enzyme in this species is believed to be ubiquinone. Couples the redox reaction to proton translocation (for every two electrons transferred, four hydrogen ions are translocated across the cytoplasmic membrane), and thus conserves the redox energy in a proton gradient. The sequence is that of NADH-quinone oxidoreductase subunit C/D from Nitrosospira multiformis (strain ATCC 25196 / NCIMB 11849 / C 71).